Consider the following 507-residue polypeptide: E3 ubiquitin-protein ligase makorin-3 (507 aa).

Residues 1–21 show a composition bias toward low complexity; it reads MEEPAAPSEAHEAAGAQAGAE. Disordered regions lie at residues 1–48 and 69–89; these read MEEP…DSAL and RGGL…PLPS. A C3H1-type 1 zinc finger spans residues 95–122; that stretch reads WTKQIICRYYIHGQCKEGENCRYSHDLS. The disordered stretch occupies residues 126–149; that stretch reads MATEGGVSPPGASAGGGPSTAAHI. The C3H1-type 2 zinc-finger motif lies at 238 to 265; the sequence is GSGLRFCYYASRGVCFRGESCMYLHGDI. The segment at 266–293 is makorin-type Cys-His; that stretch reads CDMCGLQTLHPMDAAQREEHMRACIEAH. The RING-type zinc-finger motif lies at 311 to 365; it reads CGICMEVVYEKANPNDRRFGILSNCNHSFCIRCIRRWRSARQFENRIVKSCPQCR. A C3H1-type 3 zinc finger spans residues 394–423; it reads AMSNKACRYFAEGRGNCPFGDTCFYKHEYP.

Ubiquitous.

The protein resides in the nucleus. The catalysed reaction is S-ubiquitinyl-[E2 ubiquitin-conjugating enzyme]-L-cysteine + [acceptor protein]-L-lysine = [E2 ubiquitin-conjugating enzyme]-L-cysteine + N(6)-ubiquitinyl-[acceptor protein]-L-lysine.. It participates in protein modification; protein ubiquitination. E3 ubiquitin ligase catalyzing the covalent attachment of ubiquitin moieties onto substrate proteins. Acts as a key developmental timer that helps ensure puberty begins at the appropriate age, by inhibiting premature activation of the reproductive hormone cascade. Epigenetically regulates GNRH1 transcription by disrupting the binding of methyl-DNA binding protein 3/MBD3 to the promoter of GNRH1. Mechanistically, mediates the non-proteolytic ubiquitination of MBD3 at multiple sites with 'Lys27' ubiquitin linkages and thereby regulates the methylation status of the genome, including GNRH1 promoter. Modulates the stability and translation of GNRH1 mRNA by mediating the non-proteolytic ubiquitination of PABP family members PABPC1, PABPC3 and PABPC4 at multiple sites. Also participates in the maintenance of genomic and epigenomic stability by regulating the abundance of APEX2 via 'Lys-48'-linked ubiquitination. The sequence is that of E3 ubiquitin-protein ligase makorin-3 (MKRN3) from Homo sapiens (Human).